A 36-amino-acid chain; its full sequence is Thrombin (36 aa).

Residues 19–36 (IVKGIDAEVASAPMQVML) form the Peptidase S1 domain.

The protein belongs to the peptidase S1 family. In terms of assembly, forms a heterodimer with SERPINA5. Post-translationally, the gamma-carboxyglutamyl residues, which bind calcium ions, result from the carboxylation of glutamyl residues by a microsomal enzyme, the vitamin K-dependent carboxylase. The modified residues are necessary for the calcium-dependent interaction with a negatively charged phospholipid surface, which is essential for the conversion of prothrombin to thrombin. N-glycosylated. In terms of tissue distribution, expressed by the liver and secreted in plasma.

Its subcellular location is the secreted. The enzyme catalyses Selective cleavage of Arg-|-Gly bonds in fibrinogen to form fibrin and release fibrinopeptides A and B.. Its activity is regulated as follows. Inhibited by SERPINA5. In terms of biological role, thrombin, which cleaves bonds after Arg and Lys, converts fibrinogen to fibrin and activates factors V, VII, VIII, XIII, and, in complex with thrombomodulin, protein C. Functions in blood homeostasis, inflammation and wound healing. This Salmo salar (Atlantic salmon) protein is Thrombin.